Consider the following 607-residue polypeptide: UvrABC system protein C (607 aa).

The GIY-YIG domain occupies 11–89; sequence CKPGVYRFED…IKEFAPPCNV (79 aa). Positions 201 to 236 constitute a UVR domain; that stretch reads SSLLESLKKKMLKASKNKEYEEAAILRDKIQAAQTV.

The protein belongs to the UvrC family. In terms of assembly, interacts with UvrB in an incision complex.

The protein localises to the cytoplasm. Its function is as follows. The UvrABC repair system catalyzes the recognition and processing of DNA lesions. UvrC both incises the 5' and 3' sides of the lesion. The N-terminal half is responsible for the 3' incision and the C-terminal half is responsible for the 5' incision. The polypeptide is UvrABC system protein C (Tropheryma whipplei (strain Twist) (Whipple's bacillus)).